Consider the following 4684-residue polypeptide: Plectin (4684 aa).

The interval 1 to 1470 (MVAGMLMPRD…SELTTLTSQY (1470 aa)) is globular 1. Phe20 and Arg21 each carry phosphoserine. Phosphotyrosine is present on Val26. Residue Gly42 is modified to Phosphoserine. At Thr113 the chain carries Phosphothreonine. A phosphoserine mark is found at Ser125 and Ser149. The disordered stretch occupies residues 144 to 179 (ELEEVSPETPVVPATTQRTLARPGPEPAPATDERDR). Residues 175 to 400 (DERDRVQKKT…YVSSLYDAMP (226 aa)) are actin-binding. Calponin-homology (CH) domains lie at 179–282 (RVQK…LHFQ) and 295–400 (MTAK…DAMP). One copy of the Spectrin 1 repeat lies at 645–710 (LQSVQRRPEL…SIEEFRAKIE (66 aa)). Ser720 is subject to Phosphoserine. Spectrin repeat units lie at residues 740–824 (KLLN…REDH) and 837–930 (LQTQ…AVVQ). Positions 941 to 998 (RGRLPLLAVCDYKQVEVTVHKGDECQLVGPAQPSHWKVLSSSGSEAAVPSVCFLVPPP) constitute an SH3 domain. The interval 964–4574 (ECQLVGPAQP…VGAYSKYLTC (3611 aa)) is required for interaction with intermediate filament proteins. Ser1047 bears the Phosphoserine mark. Residues 1315-1415 (RERVAQLLER…QRFAKQYINA (101 aa)) form a Spectrin 4 repeat. At Ser1435 the chain carries Phosphoserine. A coiled-coil region spans residues 1469 to 2756 (QYIKFISETL…AHSEEVTASQ (1288 aa)). A central fibrous rod domain region spans residues 1471 to 2755 (IKFISETLRR…LAHSEEVTAS (1285 aa)). The interval 1618–1650 (RAEEAEAQKRQAQEEAERLRRQVQDESQRKRQA) is disordered. Phosphoserine is present on Ser1721. An N6-acetyllysine modification is found at Lys1725. At Ser1732 the chain carries Phosphoserine. Disordered regions lie at residues 1794–1836 (LAQA…KQRQ), 2105–2139 (EAAR…EAAR), and 2217–2307 (RGEA…MEKH). Composition is skewed to basic and acidic residues over residues 1798–1836 (EAEK…KQRQ), 2105–2128 (EAAR…ERVQ), and 2217–2258 (RGEA…KQSA). Low complexity predominate over residues 2259-2272 (EEQAQARAQAQAAA). Positions 2273-2288 (EKLRKEAEQEAARRAQ) are enriched in basic and acidic residues. A Phosphoserine modification is found at Ser2631. Lys2636 is modified (N6-acetyllysine). 2 disordered regions span residues 2668-2707 (REEQ…RRKQ) and 2763-2784 (LPNG…HSFD). The span at 2679–2707 (EQERQRLVASMEEARRRQHEAEEGVRRKQ) shows a compositional bias: basic and acidic residues. The globular 2 stretch occupies residues 2756 to 4684 (QVAATKTLPN…SLGGPESAVA (1929 aa)). Residues Ser2782 and Ser2802 each carry the phosphoserine modification. Plectin repeat units lie at residues 2826–2863 (RHYL…PGTA), 2864–2901 (LILL…PELH), 2902–2939 (HKLL…REHG), 2940–2977 (IRLL…EEMN), and 2981–3015 (ADPS…PETG). The residue at position 2886 (Thr2886) is a Phosphothreonine. A Phosphotyrosine modification is found at Tyr3033. Residue Ser3036 is modified to Phosphoserine. Residues Lys3053 and Lys3091 each carry the N6-acetyllysine modification. Plectin repeat units follow at residues 3116–3153 (SLVP…VDTV), 3154–3191 (RRAL…SDMA), 3192–3229 (VALL…PEFH), 3230–3267 (EKLL…REQG), 3268–3305 (LRLL…EETS), and 3306–3343 (RALS…QLTG). Residues 3310-3331 (APRADAKAYSDPSTGEPATYGE) are disordered. Residue Tyr3362 is modified to Phosphotyrosine. An N6-acetyllysine modification is found at Lys3420. Plectin repeat units follow at residues 3485-3522 (RTLL…ATTA), 3523-3560 (ALLL…PELH), 3561-3598 (EQLL…RQHG), 3599-3636 (IRLL…EEMN), and 3640-3674 (ADPS…PETG). Ser3580 carries the post-translational modification Phosphoserine. Thr3785 carries the post-translational modification Phosphothreonine. 5 Plectin repeats span residues 3820-3857 (WCYL…AEVA), 3858-3895 (RLLL…PELH), 3896-3933 (DRLL…TEEA), 3934-3971 (LRLL…KDTH), and 3975-4008 (SEPS…DGTG). Positions 3956–4293 (PLEVAYQRGY…ETGKEMSVYE (338 aa)) are required for interaction with type2 keratins, DES and VIM. At Thr4030 the chain carries Phosphothreonine. Ser4054 carries the post-translational modification Phosphoserine. Plectin repeat units lie at residues 4063–4100 (QKFL…PGTA), 4101–4138 (FELL…PEFK), 4139–4176 (DKLL…KDHG), 4177–4214 (IRLL…EEMN), 4218–4252 (TDPS…PQTG), 4265–4305 (RKTS…HQTY), and 4319–4356 (TISS…RSAL). Residues 4250 to 4300 (QTGLCLLPLKEKKRERKTSSKSSVRKRRVVIVDPETGKEMSVYEAYRKGLI) form a binding to intermediate filaments region. A phosphoserine mark is found at Ser4382, Ser4384, Ser4385, Ser4386, Ser4389, Ser4390, Ser4391, and Ser4392. Tyr4393 is subject to Phosphotyrosine. Phosphoserine is present on residues Ser4396, Ser4400, and Ser4406. Plectin repeat units follow at residues 4408–4445 (SDPT…NITG), 4446–4483 (QRLL…KIMV), 4484–4521 (DRIN…YEAG), 4522–4559 (QRFL…ARTA), and 4560–4597 (QKLR…EGTG). Position 4411 is a phosphothreonine (Thr4411). The interval 4505–4574 (MSAAQALKKG…VGAYSKYLTC (70 aa)) is required for efficient interaction with KRT5 and KRT14 heterodimers. A Phosphothreonine; by CDK1 modification is found at Thr4539. Phosphoserine occurs at positions 4607 and 4613. The segment covering 4611–4678 (YYSPYSVSGS…ASGSSASLGG (68 aa)) has biased composition (low complexity). The tract at residues 4611 to 4684 (YYSPYSVSGS…SLGGPESAVA (74 aa)) is disordered. Tyr4615 is modified (phosphotyrosine). Phosphoserine occurs at positions 4616, 4618, and 4622. Thr4623 carries the post-translational modification Phosphothreonine. Residues 4625 to 4640 (GSRTGSRTGSRAGSRR) are 4 X 4 AA tandem repeats of G-S-R-X. Phosphoserine is present on Ser4626. An omega-N-methylarginine mark is found at Arg4627 and Arg4640. Residues Ser4642, Ser4672, and Ser4675 each carry the phosphoserine modification.

The protein belongs to the plakin or cytolinker family. Homodimer or homotetramer. Interacts (via actin-binding domain) with SYNE3. Interacts (via calponin-homology (CH) 1 domain) with VIM (via rod region). Interacts (via N-terminus) with DST isoform 2 (via N-terminus). Interacts with FER. Interacts with TOR1A. Interacts with ANK3. Identified in complexes that contain VIM, EZR, AHNAK, BFSP1, BFSP2, ANK2, PLEC, PRX and spectrin. Interacts with COL17A1. As to quaternary structure, interacts with KRT14, heterodimers consisting of KRT8 and KRT18, heterodimers consisting of KRT5 and KRT14, heterodimers consisting of KRT14 and KRT15, and heterodimers consisting of KRT1 and KRT10. Interacts with DES and VIM. Phosphorylated by CDK1; regulates dissociation from intermediate filaments during mitosis. In terms of tissue distribution, widely expressed with highest levels in muscle, heart, placenta and spinal cord.

It localises to the cytoplasm. The protein localises to the cytoskeleton. Its subcellular location is the cell junction. It is found in the hemidesmosome. The protein resides in the cell projection. It localises to the podosome. Interlinks intermediate filaments with microtubules and microfilaments and anchors intermediate filaments to desmosomes or hemidesmosomes. Could also bind muscle proteins such as actin to membrane complexes in muscle. May be involved not only in the filaments network, but also in the regulation of their dynamics. Structural component of muscle. Isoform 9 plays a major role in the maintenance of myofiber integrity. This is Plectin (PLEC) from Homo sapiens (Human).